A 553-amino-acid chain; its full sequence is Dihydroxy-acid dehydratase (553 aa).

A Mg(2+)-binding site is contributed by aspartate 78. Cysteine 119 lines the [2Fe-2S] cluster pocket. Residues aspartate 120 and lysine 121 each contribute to the Mg(2+) site. The residue at position 121 (lysine 121) is an N6-carboxylysine. Residue cysteine 193 participates in [2Fe-2S] cluster binding. Mg(2+) is bound at residue glutamate 441. The active-site Proton acceptor is serine 467.

The protein belongs to the IlvD/Edd family. In terms of assembly, homodimer. [2Fe-2S] cluster is required as a cofactor. Requires Mg(2+) as cofactor.

It catalyses the reaction (2R)-2,3-dihydroxy-3-methylbutanoate = 3-methyl-2-oxobutanoate + H2O. The catalysed reaction is (2R,3R)-2,3-dihydroxy-3-methylpentanoate = (S)-3-methyl-2-oxopentanoate + H2O. It functions in the pathway amino-acid biosynthesis; L-isoleucine biosynthesis; L-isoleucine from 2-oxobutanoate: step 3/4. Its pathway is amino-acid biosynthesis; L-valine biosynthesis; L-valine from pyruvate: step 3/4. Its function is as follows. Functions in the biosynthesis of branched-chain amino acids. Catalyzes the dehydration of (2R,3R)-2,3-dihydroxy-3-methylpentanoate (2,3-dihydroxy-3-methylvalerate) into 2-oxo-3-methylpentanoate (2-oxo-3-methylvalerate) and of (2R)-2,3-dihydroxy-3-methylbutanoate (2,3-dihydroxyisovalerate) into 2-oxo-3-methylbutanoate (2-oxoisovalerate), the penultimate precursor to L-isoleucine and L-valine, respectively. This Geotalea daltonii (strain DSM 22248 / JCM 15807 / FRC-32) (Geobacter daltonii) protein is Dihydroxy-acid dehydratase.